We begin with the raw amino-acid sequence, 122 residues long: Large ribosomal subunit protein uL14 (122 aa).

Belongs to the universal ribosomal protein uL14 family. In terms of assembly, part of the 50S ribosomal subunit. Forms a cluster with proteins L3 and L19. In the 70S ribosome, L14 and L19 interact and together make contacts with the 16S rRNA in bridges B5 and B8.

Binds to 23S rRNA. Forms part of two intersubunit bridges in the 70S ribosome. The polypeptide is Large ribosomal subunit protein uL14 (Limosilactobacillus fermentum (strain NBRC 3956 / LMG 18251) (Lactobacillus fermentum)).